Reading from the N-terminus, the 230-residue chain is MKTNKLVLIRHGQSKWNKLNKFTGWHDIELSDNGINEALKAGSLLKKEKFFFDYAHTSMLKRAIHTLRYILDTLDQSWLPVQKSWRLNERHYGALEGLNKDEMISKYGEEQVNLWRRSFEIIPPQIRLNDKRFPGNDIRYSNIDNNELPLGESLELTAKRVIPYWNKFILPQIKKRNRVLIVAHGNSLRALIQFLNKIDNKKILELNIPTATPIILEFNEEYNSIKWYYL.

Residues 10–17 (RHGQSKWN), 23–24 (TG), Arg62, 89–92 (ERHY), Lys100, 116–117 (RR), and 185–186 (GN) contribute to the substrate site. The Tele-phosphohistidine intermediate role is filled by His11. Catalysis depends on Glu89, which acts as the Proton donor/acceptor.

It belongs to the phosphoglycerate mutase family. BPG-dependent PGAM subfamily. In terms of assembly, homodimer.

The catalysed reaction is (2R)-2-phosphoglycerate = (2R)-3-phosphoglycerate. It participates in carbohydrate degradation; glycolysis; pyruvate from D-glyceraldehyde 3-phosphate: step 3/5. In terms of biological role, catalyzes the interconversion of 2-phosphoglycerate and 3-phosphoglycerate. The polypeptide is 2,3-bisphosphoglycerate-dependent phosphoglycerate mutase (Buchnera aphidicola subsp. Schizaphis graminum (strain Sg)).